The sequence spans 600 residues: NADH-quinone oxidoreductase subunit C/D (600 aa).

The interval 1–190 (MVNNMTDLTA…SPFELTKAKQ (190 aa)) is NADH dehydrogenase I subunit C. Residues 214–600 (DFMFLNLGPN…IDFVMSDVDR (387 aa)) form an NADH dehydrogenase I subunit D region.

In the N-terminal section; belongs to the complex I 30 kDa subunit family. It in the C-terminal section; belongs to the complex I 49 kDa subunit family. In terms of assembly, NDH-1 is composed of 13 different subunits. Subunits NuoB, CD, E, F, and G constitute the peripheral sector of the complex.

It is found in the cell inner membrane. It carries out the reaction a quinone + NADH + 5 H(+)(in) = a quinol + NAD(+) + 4 H(+)(out). In terms of biological role, NDH-1 shuttles electrons from NADH, via FMN and iron-sulfur (Fe-S) centers, to quinones in the respiratory chain. The immediate electron acceptor for the enzyme in this species is believed to be ubiquinone. Couples the redox reaction to proton translocation (for every two electrons transferred, four hydrogen ions are translocated across the cytoplasmic membrane), and thus conserves the redox energy in a proton gradient. The sequence is that of NADH-quinone oxidoreductase subunit C/D from Escherichia coli O127:H6 (strain E2348/69 / EPEC).